A 365-amino-acid polypeptide reads, in one-letter code: Spermine synthase (365 aa).

Residue Ala2 is modified to N-acetylalanine. A Phosphoserine modification is found at Ser57. One can recognise a PABS domain in the interval 121–361 (RYWPTADGRL…ELWVFYTVWK (241 aa)). Gln147 provides a ligand contact to S-adenosyl 3-(methylsulfanyl)propylamine. Spermidine is bound by residues Tyr176 and Asp200. Residues Glu219 and 254–255 (DC) each bind S-adenosyl 3-(methylsulfanyl)propylamine. The Proton acceptor role is filled by Asp275. Spermidine is bound by residues Tyr350 and Glu352.

It belongs to the spermidine/spermine synthase family. Homodimer. Dimerization is mediated through the N-terminal domain and seems to be required for activity as deletion of the N-terminal domain causes complete loss of activity.

It carries out the reaction S-adenosyl 3-(methylsulfanyl)propylamine + spermidine = spermine + S-methyl-5'-thioadenosine + H(+). It functions in the pathway amine and polyamine biosynthesis; spermine biosynthesis; spermine from spermidine: step 1/1. Functionally, catalyzes the production of spermine from spermidine and decarboxylated S-adenosylmethionine (dcSAM). The sequence is that of Spermine synthase (SMS) from Bos taurus (Bovine).